The chain runs to 187 residues: Resolvase OPG149 (187 aa).

Belongs to the RuvC family. Poxviruses-type subfamily. It depends on Mg(2+) as a cofactor.

Functionally, plays a role in DNA replication by cleaving viral DNA concatamers to yield unit-length viral genomes. The concatamer junctions contain inverted repeat sequences that can be extruded as cruciforms, yielding Holliday junctions that A22 protein cleaves. The protein is Resolvase OPG149 (OPG149) of Variola virus (isolate Human/India/Ind3/1967) (VARV).